Here is a 333-residue protein sequence, read N- to C-terminus: Adenosine deaminase (333 aa).

Zn(2+) is bound by residues H12 and H14. Substrate-binding residues include H14, D16, and G170. Zn(2+) is bound at residue H197. Catalysis depends on E200, which acts as the Proton donor. D278 serves as a coordination point for Zn(2+). Position 279 (D279) interacts with substrate.

It belongs to the metallo-dependent hydrolases superfamily. Adenosine and AMP deaminases family. Adenosine deaminase subfamily. Requires Zn(2+) as cofactor.

It catalyses the reaction adenosine + H2O + H(+) = inosine + NH4(+). The enzyme catalyses 2'-deoxyadenosine + H2O + H(+) = 2'-deoxyinosine + NH4(+). Functionally, catalyzes the hydrolytic deamination of adenosine and 2-deoxyadenosine. The sequence is that of Adenosine deaminase from Shigella flexneri serotype 5b (strain 8401).